The sequence spans 435 residues: Methylenetetrahydrofolate--tRNA-(uracil-5-)-methyltransferase TrmFO (435 aa).

9 to 14 (GAGLAG) provides a ligand contact to FAD.

It belongs to the MnmG family. TrmFO subfamily. It depends on FAD as a cofactor.

The protein localises to the cytoplasm. The catalysed reaction is uridine(54) in tRNA + (6R)-5,10-methylene-5,6,7,8-tetrahydrofolate + NADH + H(+) = 5-methyluridine(54) in tRNA + (6S)-5,6,7,8-tetrahydrofolate + NAD(+). It catalyses the reaction uridine(54) in tRNA + (6R)-5,10-methylene-5,6,7,8-tetrahydrofolate + NADPH + H(+) = 5-methyluridine(54) in tRNA + (6S)-5,6,7,8-tetrahydrofolate + NADP(+). In terms of biological role, catalyzes the folate-dependent formation of 5-methyl-uridine at position 54 (M-5-U54) in all tRNAs. This chain is Methylenetetrahydrofolate--tRNA-(uracil-5-)-methyltransferase TrmFO, found in Staphylococcus saprophyticus subsp. saprophyticus (strain ATCC 15305 / DSM 20229 / NCIMB 8711 / NCTC 7292 / S-41).